A 275-amino-acid chain; its full sequence is MVRKIAIYGKGGIGKSTTTQNTASAMAHFHNQRVMIHGCDPKADSTRMILGGKMQTTMMDTLREEGEEACMDLDNVMSTGFKDIKCVESGGPEPGVGCAGRGVITAITIMEHMKVYDDNDFVFFDVLGDVVCGGFAMPIRDGKAEEIYIVASGEMMALYAANNLCKGMVKYAEQSGVRLGGIICNSRNVDGEKELLEEFCKRIGTQMIHFVPRDNIVQKAEFNKRTVVDFDAECSQAHEYSELARKIIENDNFVIPDPMTMDELEEMVVSYGLMD.

Residue glycine 9 to serine 16 coordinates ATP. Position 98 (cysteine 98) interacts with [4Fe-4S] cluster. Arginine 101 is modified (ADP-ribosylarginine; by dinitrogenase reductase ADP-ribosyltransferase). Position 132 (cysteine 132) interacts with [4Fe-4S] cluster.

The protein belongs to the NifH/BchL/ChlL family. As to quaternary structure, homodimer. The cofactor is [4Fe-4S] cluster. Post-translationally, the reversible ADP-ribosylation of Arg-101 inactivates the nitrogenase reductase and regulates nitrogenase activity.

It carries out the reaction N2 + 8 reduced [2Fe-2S]-[ferredoxin] + 16 ATP + 16 H2O = H2 + 8 oxidized [2Fe-2S]-[ferredoxin] + 2 NH4(+) + 16 ADP + 16 phosphate + 6 H(+). Its function is as follows. The key enzymatic reactions in nitrogen fixation are catalyzed by the nitrogenase complex, which has 2 components: the iron protein and the molybdenum-iron protein. The protein is Nitrogenase iron protein 1 (nifH1) of Methanobacterium ivanovii.